The chain runs to 1262 residues: Isoleucine--tRNA ligase, cytoplasmic (1262 aa).

Methionine 1 is modified (N-acetylmethionine). The 'HIGH' region motif lies at 48-58 (PFATGLPHYGH). The 'KMSKS' region signature appears at 600-604 (KMSKR). ATP is bound at residue lysine 603. Serine 1049 carries the post-translational modification Phosphoserine. Threonine 1058 is modified (phosphothreonine).

It belongs to the class-I aminoacyl-tRNA synthetase family. Part of a multisubunit complex that groups tRNA ligases for Arg (RARS1), Asp (DARS1), Gln (QARS1), Ile (IARS1), Leu (LARS1), Lys (KARS1), Met (MARS1) the bifunctional ligase for Glu and Pro (EPRS1) and the auxiliary subunits AIMP1/p43, AIMP2/p38 and EEF1E1/p18.

The protein localises to the cytoplasm. It localises to the cytosol. It catalyses the reaction tRNA(Ile) + L-isoleucine + ATP = L-isoleucyl-tRNA(Ile) + AMP + diphosphate. Functionally, catalyzes the specific attachment of an amino acid to its cognate tRNA in a 2 step reaction: the amino acid (AA) is first activated by ATP to form AA-AMP and then transferred to the acceptor end of the tRNA. The polypeptide is Isoleucine--tRNA ligase, cytoplasmic (Iars1) (Mus musculus (Mouse)).